Reading from the N-terminus, the 151-residue chain is Putative superoxide dismutase [Cu-Zn] (151 aa).

Cu cation is bound by residues His43, His45, and His60. Residues Cys54 and Cys144 are joined by a disulfide bond. Residues His60, His68, His77, and Asp80 each contribute to the Zn(2+) site. His118 contributes to the Cu cation binding site.

The protein belongs to the Cu-Zn superoxide dismutase family. Cu cation serves as cofactor. Requires Zn(2+) as cofactor.

It carries out the reaction 2 superoxide + 2 H(+) = H2O2 + O2. In terms of biological role, nonessential for normal virus replication. Could be either non-functional or with a low activity. The polypeptide is Putative superoxide dismutase [Cu-Zn] (SOD) (Lepidoptera (butterflies and moths)).